The chain runs to 1292 residues: Putative late blight resistance protein homolog R1C-3 (1292 aa).

Coiled coils occupy residues 394-414 and 505-526; these read DSLAFLKNQLQVIQTKFESMQ and RMNEEIVGFEDVIETLRKKLLN. In terms of domain architecture, NB-ARC spans 505 to 792; the sequence is RMNEEIVGFE…SESFVKSCEG (288 aa). Residue 538 to 545 coordinates ATP; sequence GMPGLGKT. LRR repeat units follow at residues 842–865, 920–944, 963–991, 1066–1089, 1094–1113, 1114–1142, and 1163–1187; these read AEENFLLWINRDQITKPSSCVYSH, FKFLKVLDLEHQVVIDSIPTELFYL, LWNLETLILNRTSAATGKTLLLPSTVWDM, PIRLEMLKLHQSNIFNPISFCISA, YLELSGFYLDSQYLSETADH, LKHLEVLKLYYVEFGDHREWKVSNGMFPQ, and FPNLEQLVLRGCRHLMEIPSCFMDI. The HMA domain occupies 1211-1278; that stretch reads ETQVEDNQNT…KLRNVAYADE (68 aa).

The protein belongs to the disease resistance NB-LRR family.

The protein resides in the cytoplasm. The protein localises to the membrane. Confers resistance to late blight (Phytophthora infestans) races carrying the avirulence gene Avr1. Resistance proteins guard the plant against pathogens that contain an appropriate avirulence protein via an indirect interaction with this avirulence protein. That triggers a defense system including the hypersensitive response, which restricts the pathogen growth. In Solanum demissum (Wild potato), this protein is Putative late blight resistance protein homolog R1C-3 (R1C-3).